Reading from the N-terminus, the 598-residue chain is uncharacterized protein (598 aa).

Phosphoserine is present on Ser-46. Residues 106–441 form the SAC domain; the sequence is LQNHLKTGPF…ADYISLSYSG (336 aa). The next 2 membrane-spanning stretches (helical) occupy residues 508–528 and 535–555; these read TIRCVPYILLACLILFFMTLF and ILPPSILLILTFLGIVASLYY.

Its subcellular location is the endoplasmic reticulum membrane. This is an uncharacterized protein from Schizosaccharomyces pombe (strain 972 / ATCC 24843) (Fission yeast).